The chain runs to 113 residues: Antimicrobial peptide microplusin (113 aa).

The N-terminal stretch at 1 to 19 is a signal peptide; sequence MKSLLVLALLAFGAVLVSA. Cystine bridges form between Cys25-Cys71, Cys38-Cys99, and Cys60-Cys65.

Its subcellular location is the secreted. Functionally, has bacteriostatic activity against Gram-positive bacteria, but not against Gram-negative bacteria. Has fungistatic activity against some but not all fungi. Binds and sequesters copper and iron ions. Copper-chelating activity is crucial for antimicrobial activity against M.luteus. The chain is Antimicrobial peptide microplusin from Argas monolakensis (Mono lake bird tick).